The sequence spans 274 residues: HTH-type transcriptional regulator GadX (274 aa).

In terms of domain architecture, HTH araC/xylS-type spans 145–242 (TRVCTVINNN…GMTPTEYQER (98 aa)). DNA-binding regions (H-T-H motif) lie at residues 162–183 (ARIA…REEE) and 209–232 (IKRV…RNYY).

As to quaternary structure, homodimer.

Its function is as follows. Positively regulates the expression of about fifteen genes involved in acid resistance such as gadA, gadB and gadC. Depending on the conditions (growth phase and medium), can repress gadW. The chain is HTH-type transcriptional regulator GadX (gadX) from Escherichia coli (strain K12).